The following is a 401-amino-acid chain: tRNA(Met) cytidine acetate ligase (401 aa).

ATP contacts are provided by residues 7–20, G102, N164, and R189; that span reads IVEY…HLYH.

The protein belongs to the TmcAL family.

The protein localises to the cytoplasm. It carries out the reaction cytidine(34) in elongator tRNA(Met) + acetate + ATP = N(4)-acetylcytidine(34) in elongator tRNA(Met) + AMP + diphosphate. Functionally, catalyzes the formation of N(4)-acetylcytidine (ac(4)C) at the wobble position of elongator tRNA(Met), using acetate and ATP as substrates. First activates an acetate ion to form acetyladenylate (Ac-AMP) and then transfers the acetyl group to tRNA to form ac(4)C34. This chain is tRNA(Met) cytidine acetate ligase, found in Caldanaerobacter subterraneus subsp. tengcongensis (strain DSM 15242 / JCM 11007 / NBRC 100824 / MB4) (Thermoanaerobacter tengcongensis).